The following is a 298-amino-acid chain: Glycine--tRNA ligase alpha subunit (298 aa).

It belongs to the class-II aminoacyl-tRNA synthetase family. Tetramer of two alpha and two beta subunits.

The protein localises to the cytoplasm. It carries out the reaction tRNA(Gly) + glycine + ATP = glycyl-tRNA(Gly) + AMP + diphosphate. This is Glycine--tRNA ligase alpha subunit from Helicobacter pylori (strain Shi470).